We begin with the raw amino-acid sequence, 141 residues long: Hemoglobin subunit alpha (141 aa).

A Globin domain is found at valine 1–arginine 141. A Phosphoserine modification is found at serine 3. Lysine 7 is subject to N6-succinyllysine. Threonine 8 carries the phosphothreonine modification. Residue lysine 11 is modified to N6-succinyllysine. Position 16 is an N6-acetyllysine; alternate (lysine 16). Position 16 is an N6-succinyllysine; alternate (lysine 16). Tyrosine 24 is modified (phosphotyrosine). At lysine 40 the chain carries N6-succinyllysine. Serine 49 is modified (phosphoserine). O2 is bound at residue histidine 58. Histidine 87 is a heme b binding site. Serine 102 is subject to Phosphoserine. Residue threonine 108 is modified to Phosphothreonine. Serine 124 is subject to Phosphoserine. Phosphothreonine occurs at positions 134 and 137. Phosphoserine is present on serine 138.

Belongs to the globin family. In terms of assembly, heterotetramer of two alpha chains and two beta chains. In terms of tissue distribution, red blood cells.

Involved in oxygen transport from the lung to the various peripheral tissues. The chain is Hemoglobin subunit alpha from Tamias striatus (Eastern chipmunk).